The chain runs to 385 residues: MTAISLGVPEVPVRPIAERRVSRQIQVGPLAVGGTAPVSVQSMTTTRTSDIGATLQQIAELTASGCQIVRVACPTQDDADALAVIARKSQIPVVADIHFQPKYVFAAIEAGCAAVRVNPGNIKQFDDKVKEIARAAKEHGTPIRIGVNAGSLDRRLLEKYGKATPEALVESALWEASLFEEHDFRDIKISVKHNDPVVMVNAYRQLAAQCDYPLHLGVTEAGPAFQGTIKSAVAFGALLSEGIGDTIRVSLSAPPVEEIKVGIQILESLGLRQRRLEIVSCPSCGRAQVDVYKLAEEVTAGLEGMEVPLRVAVMGCVVNGPGEAREADLGVASGNGKGQIFVKGEVIKTVPESKIVETLIEEAMKIAEQMEQNGVASGEPAVTVS.

[4Fe-4S] cluster contacts are provided by Cys-281, Cys-284, Cys-316, and Glu-323.

This sequence belongs to the IspG family. [4Fe-4S] cluster is required as a cofactor.

The catalysed reaction is (2E)-4-hydroxy-3-methylbut-2-enyl diphosphate + oxidized [flavodoxin] + H2O + 2 H(+) = 2-C-methyl-D-erythritol 2,4-cyclic diphosphate + reduced [flavodoxin]. Its pathway is isoprenoid biosynthesis; isopentenyl diphosphate biosynthesis via DXP pathway; isopentenyl diphosphate from 1-deoxy-D-xylulose 5-phosphate: step 5/6. Its function is as follows. Converts 2C-methyl-D-erythritol 2,4-cyclodiphosphate (ME-2,4cPP) into 1-hydroxy-2-methyl-2-(E)-butenyl 4-diphosphate. The chain is 4-hydroxy-3-methylbut-2-en-1-yl diphosphate synthase (flavodoxin) 2 from Streptomyces avermitilis (strain ATCC 31267 / DSM 46492 / JCM 5070 / NBRC 14893 / NCIMB 12804 / NRRL 8165 / MA-4680).